A 443-amino-acid polypeptide reads, in one-letter code: MERVNVVGAGLAGSEAAWTLLRLGVPVRLFEMRPKRMTPAHGTDRFAEIVCSNSLGGEGETNAKGLLQAEMRRAGSLVMEAADLARVPAGGALAVDREEFSGYITERLTGHPLLEVVREEVREIPPGITVLATGPLTSEALAEALKRRFGDHFLAYYDAASPIVLYESIDLTKCFRAGRYGQSADYLNCPMTEEEYRRFHQALLEAQRHTPHDWEKLEFFEACVPVEELARRGYQTLLFGPMKPVGLVDPRTGKEPFAVVQLRQEDKAGRMWSLVGFQTGLKWPEQKRLIQMIPGLENAEIVRYGVMHRNTYLNAPRLLGETLEFREAEGLYAAGVLAGVEGYLESAATGFLAGLNAARKALGLPPVAPPEESMLGGLVRYLATANPEGFQPMYANWGLVPPVEGRMGKKEKRQAMYRRGLEAFSAWLSGLNPPLPRPEAALV.

Position 8–13 (8–13 (GAGLAG)) interacts with FAD.

This sequence belongs to the MnmG family. TrmFO subfamily. Requires FAD as cofactor.

It is found in the cytoplasm. It catalyses the reaction uridine(54) in tRNA + (6R)-5,10-methylene-5,6,7,8-tetrahydrofolate + NADH + H(+) = 5-methyluridine(54) in tRNA + (6S)-5,6,7,8-tetrahydrofolate + NAD(+). It carries out the reaction uridine(54) in tRNA + (6R)-5,10-methylene-5,6,7,8-tetrahydrofolate + NADPH + H(+) = 5-methyluridine(54) in tRNA + (6S)-5,6,7,8-tetrahydrofolate + NADP(+). In terms of biological role, catalyzes the folate-dependent formation of 5-methyl-uridine at position 54 (M-5-U54) in all tRNAs. The chain is Methylenetetrahydrofolate--tRNA-(uracil-5-)-methyltransferase TrmFO from Thermus thermophilus (strain ATCC 27634 / DSM 579 / HB8).